Reading from the N-terminus, the 544-residue chain is CTP synthase (544 aa).

An amidoligase domain region spans residues 1 to 266 (MTKFIFVTGG…DDLICERFGL (266 aa)). A CTP-binding site is contributed by Ser13. Ser13 is a binding site for UTP. Residues 14-19 (SLGKGI) and Asp71 contribute to the ATP site. Positions 71 and 140 each coordinate Mg(2+). Residues 147–149 (DIE), 187–192 (KTKPTQ), and Lys223 each bind CTP. UTP is bound by residues 187–192 (KTKPTQ) and Lys223. One can recognise a Glutamine amidotransferase type-1 domain in the interval 291 to 543 (TVAMVGKYVE…VKAAKNYSEA (253 aa)). Gly354 contributes to the L-glutamine binding site. Cys381 functions as the Nucleophile; for glutamine hydrolysis in the catalytic mechanism. L-glutamine is bound by residues 382–385 (LGMQ), Glu404, and Arg471. Active-site residues include His516 and Glu518.

Belongs to the CTP synthase family. As to quaternary structure, homotetramer.

It carries out the reaction UTP + L-glutamine + ATP + H2O = CTP + L-glutamate + ADP + phosphate + 2 H(+). The catalysed reaction is L-glutamine + H2O = L-glutamate + NH4(+). The enzyme catalyses UTP + NH4(+) + ATP = CTP + ADP + phosphate + 2 H(+). Its pathway is pyrimidine metabolism; CTP biosynthesis via de novo pathway; CTP from UDP: step 2/2. With respect to regulation, allosterically activated by GTP, when glutamine is the substrate; GTP has no effect on the reaction when ammonia is the substrate. The allosteric effector GTP functions by stabilizing the protein conformation that binds the tetrahedral intermediate(s) formed during glutamine hydrolysis. Inhibited by the product CTP, via allosteric rather than competitive inhibition. Catalyzes the ATP-dependent amination of UTP to CTP with either L-glutamine or ammonia as the source of nitrogen. Regulates intracellular CTP levels through interactions with the four ribonucleotide triphosphates. This Psychrobacter cryohalolentis (strain ATCC BAA-1226 / DSM 17306 / VKM B-2378 / K5) protein is CTP synthase.